The primary structure comprises 197 residues: RNA pyrophosphohydrolase (197 aa).

The Nudix hydrolase domain maps to 6 to 150; it reads GYRPNVGIVI…KRDVYRKVMR (145 aa). The Nudix box signature appears at 38-59; sequence GGINEGENIETAMYRELYEEVG.

This sequence belongs to the Nudix hydrolase family. RppH subfamily. Requires a divalent metal cation as cofactor.

Its function is as follows. Accelerates the degradation of transcripts by removing pyrophosphate from the 5'-end of triphosphorylated RNA, leading to a more labile monophosphorylated state that can stimulate subsequent ribonuclease cleavage. This Haemophilus ducreyi (strain 35000HP / ATCC 700724) protein is RNA pyrophosphohydrolase.